The following is a 131-amino-acid chain: Agouti-related protein (131 aa).

An N-terminal signal peptide occupies residues 1–20; that stretch reads MLTAMLLSCVLLLALPPTLG. Residues 21–81 constitute a propeptide that is removed on maturation; that stretch reads VQMGVAPLKG…VLDPQNRESR (61 aa). Disulfide bonds link Cys-86–Cys-101, Cys-93–Cys-107, Cys-100–Cys-118, Cys-104–Cys-128, and Cys-109–Cys-116. Residues 86–128 enclose the Agouti domain; the sequence is CVRLHESCLGQQVPCCDPCATCYCRFFNAFCYCRKLGTATNLC. The interval 110-112 is interaction with melanocortin receptors; that stretch reads RFF.

As to quaternary structure, interacts with melanocortin receptors MC3R, MC4R and MC5R. As to expression, expressed in arcuate nucleus and median eminence, adrenal gland (medulla), hypothalamus, testis, and lung.

It is found in the secreted. The protein resides in the golgi apparatus lumen. Its function is as follows. Plays a role in weight homeostasis. Involved in the control of feeding behavior through the central melanocortin system. Acts as alpha melanocyte-stimulating hormone antagonist by inhibiting cAMP production mediated by stimulation of melanocortin receptors within the hypothalamus and adrenal gland. Has very low activity with MC5R. Is an inverse agonist for MC3R and MC4R being able to suppress their constitutive activity. It promotes MC3R and MC4R endocytosis in an arrestin-dependent manner. This chain is Agouti-related protein (Agrp), found in Mus musculus (Mouse).